A 210-amino-acid polypeptide reads, in one-letter code: Thymidylate kinase (210 aa).

10–17 (GPEGAGKS) provides a ligand contact to ATP.

It belongs to the thymidylate kinase family.

It carries out the reaction dTMP + ATP = dTDP + ADP. Functionally, phosphorylation of dTMP to form dTDP in both de novo and salvage pathways of dTTP synthesis. This Pseudomonas syringae pv. syringae (strain B728a) protein is Thymidylate kinase.